We begin with the raw amino-acid sequence, 260 residues long: Ribosome maturation factor RimP (260 aa).

Residues 198–260 (QSLGILPPPP…RGDIDPIEGE (63 aa)) are disordered. 2 stretches are compositionally biased toward basic and acidic residues: residues 210 to 228 (AKTDPAKRGTPKPKLENGK) and 238 to 254 (NTKEHRLAAERLRRGDI).

This sequence belongs to the RimP family.

Its subcellular location is the cytoplasm. Required for maturation of 30S ribosomal subunits. The sequence is that of Ribosome maturation factor RimP from Nitrobacter winogradskyi (strain ATCC 25391 / DSM 10237 / CIP 104748 / NCIMB 11846 / Nb-255).